The chain runs to 307 residues: Malate dehydrogenase (307 aa).

NAD(+) is bound by residues 8–13 and Asp32; that span reads GAGNVG. 2 residues coordinate substrate: Arg81 and Arg87. Residues Asn94 and 117-119 contribute to the NAD(+) site; that span reads VSN. Residues Asn119 and Arg150 each contribute to the substrate site. His174 (proton acceptor) is an active-site residue.

The protein belongs to the LDH/MDH superfamily. MDH type 3 family.

The catalysed reaction is (S)-malate + NAD(+) = oxaloacetate + NADH + H(+). Catalyzes the reversible oxidation of malate to oxaloacetate. This chain is Malate dehydrogenase, found in Dehalococcoides mccartyi (strain CBDB1).